A 109-amino-acid polypeptide reads, in one-letter code: Large ribosomal subunit protein uL22 (109 aa).

The protein belongs to the universal ribosomal protein uL22 family. As to quaternary structure, part of the 50S ribosomal subunit.

Its function is as follows. This protein binds specifically to 23S rRNA; its binding is stimulated by other ribosomal proteins, e.g. L4, L17, and L20. It is important during the early stages of 50S assembly. It makes multiple contacts with different domains of the 23S rRNA in the assembled 50S subunit and ribosome. The globular domain of the protein is located near the polypeptide exit tunnel on the outside of the subunit, while an extended beta-hairpin is found that lines the wall of the exit tunnel in the center of the 70S ribosome. The sequence is that of Large ribosomal subunit protein uL22 from Azoarcus sp. (strain BH72).